The sequence spans 280 residues: MSKAITDVFYTAFKTALPLTSSPLVQCITNEITVESMANALLYIDAKPVMADDQREFPEFFAQSDALLLNLGHISEVRQQNLLAAGKFAQATNQPTVIDLVGVSATQLRYDLGHQLLVNHPNVVKGNISEMRRFADLKSTGRGVDGSQLDQSVTALGELAASLQQLTQAFPTTTFLATGKIDLVVSAKGTWYLKNGVPQLDRFTGTGDIVGALIAALLGTGLDNDAAVVVAVSYFNCCGEVAAAQNRTGGLAAFREGTLNQLSLLAATADWLQMVKGEAL.

Substrate is bound at residue Met50. Residues Lys125 and Thr178 each coordinate ATP. Gly205 lines the substrate pocket.

It belongs to the Thz kinase family. It depends on Mg(2+) as a cofactor.

It catalyses the reaction 5-(2-hydroxyethyl)-4-methylthiazole + ATP = 4-methyl-5-(2-phosphooxyethyl)-thiazole + ADP + H(+). Its pathway is cofactor biosynthesis; thiamine diphosphate biosynthesis; 4-methyl-5-(2-phosphoethyl)-thiazole from 5-(2-hydroxyethyl)-4-methylthiazole: step 1/1. Functionally, catalyzes the phosphorylation of the hydroxyl group of 4-methyl-5-beta-hydroxyethylthiazole (THZ). The chain is Hydroxyethylthiazole kinase from Lacticaseibacillus paracasei (strain ATCC 334 / BCRC 17002 / CCUG 31169 / CIP 107868 / KCTC 3260 / NRRL B-441) (Lactobacillus paracasei).